Here is an 859-residue protein sequence, read N- to C-terminus: Leucine--tRNA ligase (859 aa).

A 'HIGH' region motif is present at residues 42 to 52 (PYPSGKLHVGH). The 'KMSKS' region signature appears at 611 to 615 (KMSKS). Position 614 (Lys614) interacts with ATP.

Belongs to the class-I aminoacyl-tRNA synthetase family.

It localises to the cytoplasm. It catalyses the reaction tRNA(Leu) + L-leucine + ATP = L-leucyl-tRNA(Leu) + AMP + diphosphate. The protein is Leucine--tRNA ligase of Fusobacterium nucleatum subsp. nucleatum (strain ATCC 25586 / DSM 15643 / BCRC 10681 / CIP 101130 / JCM 8532 / KCTC 2640 / LMG 13131 / VPI 4355).